The following is a 263-amino-acid chain: Stress-response A/B barrel domain-containing protein UP3 (263 aa).

Stress-response A/B barrel domains are found at residues 49–142 and 158–252; these read IEHI…AVDW and VAKL…VVEF. A Peroxisomal targeting signal motif is present at residues 261–263; the sequence is SSL.

In terms of assembly, homodimer.

It localises to the peroxisome. Involved in stress response. This is Stress-response A/B barrel domain-containing protein UP3 from Arabidopsis thaliana (Mouse-ear cress).